The chain runs to 151 residues: 3-hydroxyacyl-[acyl-carrier-protein] dehydratase FabZ (151 aa).

Histidine 49 is an active-site residue.

It belongs to the thioester dehydratase family. FabZ subfamily.

The protein localises to the cytoplasm. It carries out the reaction a (3R)-hydroxyacyl-[ACP] = a (2E)-enoyl-[ACP] + H2O. Involved in unsaturated fatty acids biosynthesis. Catalyzes the dehydration of short chain beta-hydroxyacyl-ACPs and long chain saturated and unsaturated beta-hydroxyacyl-ACPs. The polypeptide is 3-hydroxyacyl-[acyl-carrier-protein] dehydratase FabZ (Bordetella petrii (strain ATCC BAA-461 / DSM 12804 / CCUG 43448)).